Reading from the N-terminus, the 1009-residue chain is Chitin synthase 2 (1009 aa).

2 stretches are compositionally biased toward polar residues: residues 1 to 12 (MSYNNPNNSNSH) and 34 to 62 (EFLNQRSNTPLTQGTYNYHNTSTNSLNFQ). Disordered stretches follow at residues 1–62 (MSYN…LNFQ) and 175–234 (DESQ…EVRS). The segment covering 192–202 (EGEEEEEEGET) has biased composition (acidic residues). The next 7 membrane-spanning stretches (helical) occupy residues 647 to 667 (WLNGSFFAAIYSLVHFYKVWT), 682 to 702 (FFYQLINLIVSWFSIGSYFLV), 722 to 742 (ILSVIFLWLYLASIVTTFVLS), 757 to 777 (IVIFFAILMAYMIFAAIFMAV), 804 to 823 (LVVATSSTYALYFLASFLYF), 930 to 950 (VLVWMFTNFVVIALVLETGGF), and 967 to 987 (AAVFLTVILWTVAFMALFRFI).

It belongs to the chitin synthase family.

The protein resides in the cell membrane. The enzyme catalyses [(1-&gt;4)-N-acetyl-beta-D-glucosaminyl](n) + UDP-N-acetyl-alpha-D-glucosamine = [(1-&gt;4)-N-acetyl-beta-D-glucosaminyl](n+1) + UDP + H(+). In terms of biological role, polymerizes chitin, a structural polymer of the cell wall and septum, by transferring the sugar moiety of UDP-GlcNAc to the non-reducing end of the growing chitin polymer. In Candida albicans (Yeast), this protein is Chitin synthase 2 (CHS2).